We begin with the raw amino-acid sequence, 388 residues long: Formate-dependent phosphoribosylglycinamide formyltransferase (388 aa).

N(1)-(5-phospho-beta-D-ribosyl)glycinamide is bound by residues 21 to 22 and E81; that span reads EL. Residues R113, K154, 159 to 164, 193 to 196, and E201 each bind ATP; these read SSGHGQ and EEFI. Residues 118 to 306 enclose the ATP-grasp domain; sequence KFAAEELGLK…EFALHVRAVL (189 aa). Positions 265 and 277 each coordinate Mg(2+). N(1)-(5-phospho-beta-D-ribosyl)glycinamide contacts are provided by residues D284, K352, and 359–360; that span reads RR.

This sequence belongs to the PurK/PurT family. As to quaternary structure, homodimer.

It catalyses the reaction N(1)-(5-phospho-beta-D-ribosyl)glycinamide + formate + ATP = N(2)-formyl-N(1)-(5-phospho-beta-D-ribosyl)glycinamide + ADP + phosphate + H(+). It functions in the pathway purine metabolism; IMP biosynthesis via de novo pathway; N(2)-formyl-N(1)-(5-phospho-D-ribosyl)glycinamide from N(1)-(5-phospho-D-ribosyl)glycinamide (formate route): step 1/1. Functionally, involved in the de novo purine biosynthesis. Catalyzes the transfer of formate to 5-phospho-ribosyl-glycinamide (GAR), producing 5-phospho-ribosyl-N-formylglycinamide (FGAR). Formate is provided by PurU via hydrolysis of 10-formyl-tetrahydrofolate. The chain is Formate-dependent phosphoribosylglycinamide formyltransferase from Nitratiruptor sp. (strain SB155-2).